Consider the following 521-residue polypeptide: Probable rhamnogalacturonase B (521 aa).

Residues M1–A21 form the signal peptide. A disulfide bridge connects residues C42 and C68. N145 is a glycosylation site (N-linked (GlcNAc...) asparagine). Residue D219 is the Proton donor of the active site. Residues C221 and C238 are joined by a disulfide bond. A glycan (N-linked (GlcNAc...) asparagine) is linked at N239. H294 is an active-site residue. The N-linked (GlcNAc...) asparagine glycan is linked to N321. Cystine bridges form between C344–C350 and C372–C381. Positions E462–I521 are disordered. The span at R469–P486 shows a compositional bias: polar residues. Positions P507–I521 are enriched in basic residues.

This sequence belongs to the glycosyl hydrolase 28 family.

The protein resides in the secreted. The enzyme catalyses Endohydrolysis of alpha-D-GalA-(1-&gt;2)-alpha-L-Rha glycosidic bond in the rhamnogalacturonan I backbone with initial inversion of anomeric configuration releasing oligosaccharides with beta-D-GalA at the reducing end.. Pectinolytic enzymes consist of four classes of enzymes: pectine lyase, polygalacturonase, pectin methylesterase and rhamnogalacturonase. Hydrolyzes alpha-D-galacturonopyranosyl-(1,2)-alpha-L-rhamnopyranosyl linkages in the backbone of the hairy regions of pectins. This Aspergillus fumigatus (strain ATCC MYA-4609 / CBS 101355 / FGSC A1100 / Af293) (Neosartorya fumigata) protein is Probable rhamnogalacturonase B (rhgB).